The following is an 81-amino-acid chain: Photosystem I iron-sulfur center (81 aa).

4Fe-4S ferredoxin-type domains lie at 2–31 (SHKI…MIPW) and 39–68 (IASA…VRVY). Residues Cys-11, Cys-14, Cys-17, Cys-21, Cys-48, Cys-51, Cys-54, and Cys-58 each coordinate [4Fe-4S] cluster.

As to quaternary structure, the eukaryotic PSI reaction center is composed of at least 11 subunits. It depends on [4Fe-4S] cluster as a cofactor.

The protein resides in the plastid. Its subcellular location is the chloroplast thylakoid membrane. The catalysed reaction is reduced [plastocyanin] + hnu + oxidized [2Fe-2S]-[ferredoxin] = oxidized [plastocyanin] + reduced [2Fe-2S]-[ferredoxin]. Functionally, apoprotein for the two 4Fe-4S centers FA and FB of photosystem I (PSI); essential for photochemical activity. FB is the terminal electron acceptor of PSI, donating electrons to ferredoxin. The C-terminus interacts with PsaA/B/D and helps assemble the protein into the PSI complex. Required for binding of PsaD and PsaE to PSI. PSI is a plastocyanin-ferredoxin oxidoreductase, converting photonic excitation into a charge separation, which transfers an electron from the donor P700 chlorophyll pair to the spectroscopically characterized acceptors A0, A1, FX, FA and FB in turn. The sequence is that of Photosystem I iron-sulfur center from Chara vulgaris (Common stonewort).